The primary structure comprises 211 residues: FMN-dependent NADH:quinone oxidoreductase (211 aa).

Residues Ser10, 16-18, and 138-141 contribute to the FMN site; these read STS and TQGG.

Belongs to the azoreductase type 1 family. As to quaternary structure, homodimer. FMN serves as cofactor.

It catalyses the reaction 2 a quinone + NADH + H(+) = 2 a 1,4-benzosemiquinone + NAD(+). It carries out the reaction N,N-dimethyl-1,4-phenylenediamine + anthranilate + 2 NAD(+) = 2-(4-dimethylaminophenyl)diazenylbenzoate + 2 NADH + 2 H(+). Quinone reductase that provides resistance to thiol-specific stress caused by electrophilic quinones. Its function is as follows. Also exhibits azoreductase activity. Catalyzes the reductive cleavage of the azo bond in aromatic azo compounds to the corresponding amines. This chain is FMN-dependent NADH:quinone oxidoreductase, found in Frankia alni (strain DSM 45986 / CECT 9034 / ACN14a).